Consider the following 177-residue polypeptide: Nucleoside triphosphate/diphosphate phosphatase (177 aa).

The Proton donor role is filled by Arg-23. Residues Asn-87, Asp-103, Asp-105, Asp-107, Asp-120, and Glu-123 each coordinate Mg(2+).

This sequence belongs to the Ntdp family. Mg(2+) serves as cofactor.

It catalyses the reaction a ribonucleoside 5'-triphosphate + H2O = a ribonucleoside 5'-diphosphate + phosphate + H(+). The catalysed reaction is a ribonucleoside 5'-diphosphate + H2O = a ribonucleoside 5'-phosphate + phosphate + H(+). Functionally, has nucleoside phosphatase activity towards nucleoside triphosphates and nucleoside diphosphates. The chain is Nucleoside triphosphate/diphosphate phosphatase from Streptococcus pyogenes serotype M3 (strain ATCC BAA-595 / MGAS315).